Consider the following 220-residue polypeptide: Zinc finger protein 36 (220 aa).

The C2H2-type 1 zinc-finger motif lies at 73–95 (FRCTVCGKAFASYQALGGHKSSH). A disordered region spans residues 90 to 134 (GHKSSHRKPPSPGDHYGAAAAAQQLASAGDSKEDSASSAAGSTGP). Positions 107 to 117 (AAAAAQQLASA) are enriched in low complexity. The C2H2-type 2 zinc finger occupies 135–157 (HRCTICRRSFATGQALGGHKRCH).

Probable transcription factor involved in abscisic acid (ABA) signaling. Required for the regulation of the cross-talk between NADPH oxidase, hydrogen peroxide and MAP kinase in ABA signaling. Regulates the expression of the NADPH oxidase genes RBOHB and RBOHE, and the MAPK genes MPK1, MPK4, MPK5, MPK7 and MPK14. Regulates ABA-induced hydrogen peroxide production and antioxidant defense. Required for tolerance to water stress and oxidative stress. The polypeptide is Zinc finger protein 36 (Oryza sativa subsp. japonica (Rice)).